A 149-amino-acid chain; its full sequence is UPF0178 protein NT01CX_0440 (149 aa).

This sequence belongs to the UPF0178 family.

This chain is UPF0178 protein NT01CX_0440, found in Clostridium novyi (strain NT).